The following is a 184-amino-acid chain: Large ribosomal subunit protein uL5c (184 aa).

It belongs to the universal ribosomal protein uL5 family. As to quaternary structure, part of the 50S ribosomal subunit; contacts the 5S rRNA.

It localises to the plastid. The protein resides in the chloroplast. Functionally, binds 5S rRNA, forms part of the central protuberance of the 50S subunit. In Zygnema circumcarinatum (Green alga), this protein is Large ribosomal subunit protein uL5c (rpl5).